A 604-amino-acid polypeptide reads, in one-letter code: NRPS-independent siderophore synthetase-like protein ankE (604 aa).

The catalysed reaction is cyclo(L-arginyl-(Z)-dehydro-4-O-homoseryl-tyrosyl) + citrate + ATP = NK13650 B + AMP + diphosphate + H(+). It functions in the pathway secondary metabolite biosynthesis. In terms of biological role, NRPS-independent siderophore synthetase-like protein; part of the ank cluster that mediates the biosynthesis of NK13650 C, a highly modified cyclo-arginine-tyrosine dipeptide. AnkE is responsible of the production of NK13650 B via ligation of citrate to the ankD product. Within the pathway, the cyclodipeptide synthase ankA acts as the scaffold-generating enzyme and is responsible for formation of the cyclo-Arg-Tyr diketopiperazine (cRY) from L-Arg and L-Tyr. The ankA product cRY is desaturated by the cytochrome P450 monooxygenase ankB to yield a dehydro-cyclodipeptide intermediate. The FAD-dependent monooxygenase ankC then installs the m-OH, ankD catalyzes the attachment of L-homoserine, and ankE ligates citrate to the ankD product to yield NK13650 B. The O-methyltransferase ankF is responsible for methylation of the C-17 phenol group of NK13650 B to produce NK13650 D. Amidation of NK13650 D with L-Asp by ankG then leads to the production of NK13650 C, whereas amidation of NK13650 B produces NK13650 A. The chain is NRPS-independent siderophore synthetase-like protein ankE from Aspergillus thermomutatus (Neosartorya pseudofischeri).